The following is a 308-amino-acid chain: uncharacterized protein (308 aa).

Positions 158–221 (GDSNAETFEE…DSINHGESSE (64 aa)) are disordered. Positions 206-221 (RNGDRSDSINHGESSE) are enriched in basic and acidic residues.

This is an uncharacterized protein from Arabidopsis thaliana (Mouse-ear cress).